A 325-amino-acid polypeptide reads, in one-letter code: Biotin synthase (325 aa).

Residues 49–267 enclose the Radical SAM core domain; that stretch reads TQVQISTLLS…IAAARISMPR (219 aa). [4Fe-4S] cluster-binding residues include Cys-64, Cys-68, and Cys-71. [2Fe-2S] cluster-binding residues include Cys-108, Cys-139, Cys-199, and Arg-271.

Belongs to the radical SAM superfamily. Biotin synthase family. As to quaternary structure, homodimer. The cofactor is [4Fe-4S] cluster. It depends on [2Fe-2S] cluster as a cofactor.

It catalyses the reaction (4R,5S)-dethiobiotin + (sulfur carrier)-SH + 2 reduced [2Fe-2S]-[ferredoxin] + 2 S-adenosyl-L-methionine = (sulfur carrier)-H + biotin + 2 5'-deoxyadenosine + 2 L-methionine + 2 oxidized [2Fe-2S]-[ferredoxin]. The protein operates within cofactor biosynthesis; biotin biosynthesis; biotin from 7,8-diaminononanoate: step 2/2. Functionally, catalyzes the conversion of dethiobiotin (DTB) to biotin by the insertion of a sulfur atom into dethiobiotin via a radical-based mechanism. In Acidiphilium cryptum (strain JF-5), this protein is Biotin synthase.